The chain runs to 299 residues: GTPase Era (299 aa).

Positions 5-172 (KSGFVSIIGR…IDVLKTYLPE (168 aa)) constitute an Era-type G domain. Residues 13–20 (GRPNVGKS) are G1. 13 to 20 (GRPNVGKS) lines the GTP pocket. A G2 region spans residues 39-43 (QTTRN). Positions 60–63 (DTPG) are G3. Residues 60 to 64 (DTPGI) and 122 to 125 (NKID) each bind GTP. Residues 122 to 125 (NKID) form a G4 region. A G5 region spans residues 151-153 (ISA). The 78-residue stretch at 203–280 (TSEEIPHAIG…YLELWVKVQR (78 aa)) folds into the KH type-2 domain.

The protein belongs to the TRAFAC class TrmE-Era-EngA-EngB-Septin-like GTPase superfamily. Era GTPase family. In terms of assembly, monomer.

The protein localises to the cytoplasm. Its subcellular location is the cell membrane. In terms of biological role, an essential GTPase that binds both GDP and GTP, with rapid nucleotide exchange. Plays a role in 16S rRNA processing and 30S ribosomal subunit biogenesis and possibly also in cell cycle regulation and energy metabolism. In Staphylococcus aureus (strain Mu3 / ATCC 700698), this protein is GTPase Era.